Consider the following 461-residue polypeptide: ATP synthase subunit beta (461 aa).

151–158 is an ATP binding site; the sequence is GGAGVGKT.

The protein belongs to the ATPase alpha/beta chains family. In terms of assembly, F-type ATPases have 2 components, CF(1) - the catalytic core - and CF(0) - the membrane proton channel. CF(1) has five subunits: alpha(3), beta(3), gamma(1), delta(1), epsilon(1). CF(0) has three main subunits: a(1), b(2) and c(9-12). The alpha and beta chains form an alternating ring which encloses part of the gamma chain. CF(1) is attached to CF(0) by a central stalk formed by the gamma and epsilon chains, while a peripheral stalk is formed by the delta and b chains.

The protein localises to the cell inner membrane. It catalyses the reaction ATP + H2O + 4 H(+)(in) = ADP + phosphate + 5 H(+)(out). In terms of biological role, produces ATP from ADP in the presence of a proton gradient across the membrane. The catalytic sites are hosted primarily by the beta subunits. In Pseudoalteromonas translucida (strain TAC 125), this protein is ATP synthase subunit beta.